Reading from the N-terminus, the 199-residue chain is Recombination protein RecR (199 aa).

Residues cysteine 58–cysteine 73 form a C4-type zinc finger. The 95-residue stretch at lysine 81 to proline 175 folds into the Toprim domain.

Belongs to the RecR family.

May play a role in DNA repair. It seems to be involved in an RecBC-independent recombinational process of DNA repair. It may act with RecF and RecO. This Prochlorococcus marinus (strain MIT 9312) protein is Recombination protein RecR.